Here is a 347-residue protein sequence, read N- to C-terminus: Twinfilin-2 (347 aa).

2 consecutive ADF-H domains span residues 3-137 (LVLV…RHIT) and 175-311 (GLAF…DEVH). The interval 314 to 347 (QHAHKQAFAKPRGPAGKRGNKRLIKGGGENGGNS) is disordered. Residues 338 to 347 (KGGGENGGNS) are compositionally biased toward gly residues.

This sequence belongs to the actin-binding proteins ADF family. Twinfilin subfamily. In terms of assembly, interacts with G-actin; ADP-actin form and capping protein (CP).

Its subcellular location is the cytoplasm. The protein resides in the cytoskeleton. The protein localises to the perinuclear region. Functionally, actin-binding protein involved in motile and morphological processes. Inhibits actin polymerization, likely by sequestering G-actin. This Danio rerio (Zebrafish) protein is Twinfilin-2 (twf2).